We begin with the raw amino-acid sequence, 141 residues long: Acetyltransferase YpeA (141 aa).

The N-acetyltransferase domain occupies 1–141; it reads MEIRVFRQED…GKRLIEDEEY (141 aa).

It belongs to the acetyltransferase family. YpeA subfamily.

This chain is Acetyltransferase YpeA (ypeA), found in Escherichia coli (strain K12).